The sequence spans 259 residues: Thiazole synthase (259 aa).

Lys-99 serves as the catalytic Schiff-base intermediate with DXP. Residues Gly-161, 187–188, and 209–210 contribute to the 1-deoxy-D-xylulose 5-phosphate site; these read AG and NT.

The protein belongs to the ThiG family. Homotetramer. Forms heterodimers with either ThiH or ThiS.

The protein resides in the cytoplasm. It carries out the reaction [ThiS sulfur-carrier protein]-C-terminal-Gly-aminoethanethioate + 2-iminoacetate + 1-deoxy-D-xylulose 5-phosphate = [ThiS sulfur-carrier protein]-C-terminal Gly-Gly + 2-[(2R,5Z)-2-carboxy-4-methylthiazol-5(2H)-ylidene]ethyl phosphate + 2 H2O + H(+). The protein operates within cofactor biosynthesis; thiamine diphosphate biosynthesis. In terms of biological role, catalyzes the rearrangement of 1-deoxy-D-xylulose 5-phosphate (DXP) to produce the thiazole phosphate moiety of thiamine. Sulfur is provided by the thiocarboxylate moiety of the carrier protein ThiS. In vitro, sulfur can be provided by H(2)S. The sequence is that of Thiazole synthase from Nautilia profundicola (strain ATCC BAA-1463 / DSM 18972 / AmH).